A 146-amino-acid chain; its full sequence is 3-dehydroquinate dehydratase (146 aa).

The active-site Proton acceptor is Tyr-22. 3 residues coordinate substrate: Asn-74, His-80, and Asp-87. His-100 acts as the Proton donor in catalysis. Residues 101–102 and Arg-111 each bind substrate; that span reads LS.

The protein belongs to the type-II 3-dehydroquinase family. Homododecamer.

It catalyses the reaction 3-dehydroquinate = 3-dehydroshikimate + H2O. It participates in metabolic intermediate biosynthesis; chorismate biosynthesis; chorismate from D-erythrose 4-phosphate and phosphoenolpyruvate: step 3/7. Functionally, catalyzes a trans-dehydration via an enolate intermediate. In Clostridium perfringens (strain SM101 / Type A), this protein is 3-dehydroquinate dehydratase.